The following is a 412-amino-acid chain: Alpha-ketoglutarate-dependent sulfonate dioxygenase (412 aa).

S52 carries the phosphoserine modification. Residues H218 and D220 each contribute to the Fe cation site. 2-oxoglutarate contacts are provided by T245 and W352. Position 367 (H367) interacts with Fe cation. Residues R379 and R383 each coordinate 2-oxoglutarate.

It belongs to the TfdA dioxygenase family. Fe(2+) serves as cofactor.

It participates in organosulfur degradation; alkanesulfonate degradation. In terms of biological role, acts as an alpha-ketoglutarate-dependent dioxygenase active on sulfonates. Although taurine is a poor substrate, a variety of other sulfonates are utilized, with the best natural substrates being isethionate and taurocholate. This chain is Alpha-ketoglutarate-dependent sulfonate dioxygenase (JLP1), found in Saccharomyces cerevisiae (strain ATCC 204508 / S288c) (Baker's yeast).